A 356-amino-acid chain; its full sequence is Heat-inducible transcription repressor HrcA (356 aa).

The protein belongs to the HrcA family.

Its function is as follows. Negative regulator of class I heat shock genes (grpE-dnaK-dnaJ and groELS operons). Prevents heat-shock induction of these operons. The polypeptide is Heat-inducible transcription repressor HrcA (Bartonella quintana (strain Toulouse) (Rochalimaea quintana)).